The following is a 276-amino-acid chain: Pantothenate synthetase (276 aa).

27 to 34 is a binding site for ATP; it reads MGALHKGH. Catalysis depends on histidine 34, which acts as the Proton donor. Glutamine 58 contacts (R)-pantoate. Position 58 (glutamine 58) interacts with beta-alanine. Position 147 to 150 (147 to 150) interacts with ATP; sequence GKKD. Glutamine 153 lines the (R)-pantoate pocket. ATP contacts are provided by residues valine 176 and 184 to 187; that span reads LSSR.

It belongs to the pantothenate synthetase family. As to quaternary structure, homodimer.

It localises to the cytoplasm. It catalyses the reaction (R)-pantoate + beta-alanine + ATP = (R)-pantothenate + AMP + diphosphate + H(+). It participates in cofactor biosynthesis; (R)-pantothenate biosynthesis; (R)-pantothenate from (R)-pantoate and beta-alanine: step 1/1. Its function is as follows. Catalyzes the condensation of pantoate with beta-alanine in an ATP-dependent reaction via a pantoyl-adenylate intermediate. The protein is Pantothenate synthetase of Helicobacter acinonychis (strain Sheeba).